Reading from the N-terminus, the 875-residue chain is Alanine--tRNA ligase (875 aa).

4 residues coordinate Zn(2+): His-564, His-568, Cys-666, and His-670.

It belongs to the class-II aminoacyl-tRNA synthetase family. Homotetramer. Zn(2+) serves as cofactor.

Its subcellular location is the cytoplasm. It catalyses the reaction tRNA(Ala) + L-alanine + ATP = L-alanyl-tRNA(Ala) + AMP + diphosphate. Functionally, catalyzes the attachment of alanine to tRNA(Ala) in a two-step reaction: alanine is first activated by ATP to form Ala-AMP and then transferred to the acceptor end of tRNA(Ala). Also edits incorrectly charged Ser-tRNA(Ala) and Gly-tRNA(Ala) via its editing domain. The polypeptide is Alanine--tRNA ligase (Yersinia pseudotuberculosis serotype O:1b (strain IP 31758)).